We begin with the raw amino-acid sequence, 427 residues long: UDP-N-acetylglucosamine 1-carboxyvinyltransferase 1 (427 aa).

Phosphoenolpyruvate is bound at residue 23–24; that stretch reads KN. Position 96 (Arg96) interacts with UDP-N-acetyl-alpha-D-glucosamine. Cys120 (proton donor) is an active-site residue. The residue at position 120 (Cys120) is a 2-(S-cysteinyl)pyruvic acid O-phosphothioketal. UDP-N-acetyl-alpha-D-glucosamine is bound by residues 125 to 129, Asp309, and Val331; that span reads RPIDL.

Belongs to the EPSP synthase family. MurA subfamily.

The protein resides in the cytoplasm. The enzyme catalyses phosphoenolpyruvate + UDP-N-acetyl-alpha-D-glucosamine = UDP-N-acetyl-3-O-(1-carboxyvinyl)-alpha-D-glucosamine + phosphate. It functions in the pathway cell wall biogenesis; peptidoglycan biosynthesis. Functionally, cell wall formation. Adds enolpyruvyl to UDP-N-acetylglucosamine. In Streptococcus pneumoniae serotype 4 (strain ATCC BAA-334 / TIGR4), this protein is UDP-N-acetylglucosamine 1-carboxyvinyltransferase 1.